The primary structure comprises 123 residues: Fluoride-specific ion channel FluC 1 (123 aa).

3 helical membrane-spanning segments follow: residues 33–53 (TFLI…LFGV), 59–79 (YGTM…TTFS), and 98–118 (VFYL…GAML). Gly-73 and Thr-76 together coordinate Na(+).

It belongs to the fluoride channel Fluc/FEX (TC 1.A.43) family.

The protein resides in the cell inner membrane. It catalyses the reaction fluoride(in) = fluoride(out). Na(+) is not transported, but it plays an essential structural role and its presence is essential for fluoride channel function. Functionally, fluoride-specific ion channel. Important for reducing fluoride concentration in the cell, thus reducing its toxicity. The sequence is that of Fluoride-specific ion channel FluC 1 from Brucella melitensis biotype 1 (strain ATCC 23456 / CCUG 17765 / NCTC 10094 / 16M).